A 169-amino-acid chain; its full sequence is Peptide methionine sulfoxide reductase MsrA (169 aa).

Cys-10 is a catalytic residue.

The protein belongs to the MsrA Met sulfoxide reductase family.

It catalyses the reaction L-methionyl-[protein] + [thioredoxin]-disulfide + H2O = L-methionyl-(S)-S-oxide-[protein] + [thioredoxin]-dithiol. It carries out the reaction [thioredoxin]-disulfide + L-methionine + H2O = L-methionine (S)-S-oxide + [thioredoxin]-dithiol. Its function is as follows. Has an important function as a repair enzyme for proteins that have been inactivated by oxidation. Catalyzes the reversible oxidation-reduction of methionine sulfoxide in proteins to methionine. The protein is Peptide methionine sulfoxide reductase MsrA of Streptococcus mutans serotype c (strain ATCC 700610 / UA159).